A 146-amino-acid polypeptide reads, in one-letter code: Probable cyclic pyranopterin monophosphate synthase (146 aa).

Residues 66–68 (LTH) and 102–103 (ME) contribute to the substrate site. D117 is a catalytic residue.

It belongs to the MoaC family. Homohexamer; trimer of dimers.

It catalyses the reaction (8S)-3',8-cyclo-7,8-dihydroguanosine 5'-triphosphate = cyclic pyranopterin phosphate + diphosphate. It functions in the pathway cofactor biosynthesis; molybdopterin biosynthesis. Functionally, catalyzes the conversion of (8S)-3',8-cyclo-7,8-dihydroguanosine 5'-triphosphate to cyclic pyranopterin monophosphate (cPMP). The polypeptide is Probable cyclic pyranopterin monophosphate synthase (Aeropyrum pernix (strain ATCC 700893 / DSM 11879 / JCM 9820 / NBRC 100138 / K1)).